Consider the following 259-residue polypeptide: 1-(5-phosphoribosyl)-5-[(5-phosphoribosylamino)methylideneamino] imidazole-4-carboxamide isomerase (259 aa).

The active-site Proton acceptor is the Asp-8. Asp-129 (proton donor) is an active-site residue.

This sequence belongs to the HisA/HisF family.

It is found in the cytoplasm. It carries out the reaction 1-(5-phospho-beta-D-ribosyl)-5-[(5-phospho-beta-D-ribosylamino)methylideneamino]imidazole-4-carboxamide = 5-[(5-phospho-1-deoxy-D-ribulos-1-ylimino)methylamino]-1-(5-phospho-beta-D-ribosyl)imidazole-4-carboxamide. The protein operates within amino-acid biosynthesis; L-histidine biosynthesis; L-histidine from 5-phospho-alpha-D-ribose 1-diphosphate: step 4/9. In Pelotomaculum thermopropionicum (strain DSM 13744 / JCM 10971 / SI), this protein is 1-(5-phosphoribosyl)-5-[(5-phosphoribosylamino)methylideneamino] imidazole-4-carboxamide isomerase.